Here is a 281-residue protein sequence, read N- to C-terminus: 2-C-methyl-D-erythritol 4-phosphate cytidylyltransferase (281 aa).

This sequence belongs to the IspD/TarI cytidylyltransferase family. IspD subfamily.

It catalyses the reaction 2-C-methyl-D-erythritol 4-phosphate + CTP + H(+) = 4-CDP-2-C-methyl-D-erythritol + diphosphate. Its pathway is isoprenoid biosynthesis; isopentenyl diphosphate biosynthesis via DXP pathway; isopentenyl diphosphate from 1-deoxy-D-xylulose 5-phosphate: step 2/6. Functionally, catalyzes the formation of 4-diphosphocytidyl-2-C-methyl-D-erythritol from CTP and 2-C-methyl-D-erythritol 4-phosphate (MEP). The sequence is that of 2-C-methyl-D-erythritol 4-phosphate cytidylyltransferase from Psychrobacter arcticus (strain DSM 17307 / VKM B-2377 / 273-4).